A 391-amino-acid chain; its full sequence is Autophagy-related protein 18d (391 aa).

The interval 1-24 is disordered; that stretch reads MDPRRNFQPGGYDSRNTFTSGSFG. WD repeat units lie at residues 31–69, 74–118, 203–243, and 248–287; these read SDEA…ETFR, DGGF…CISE, AHDS…RLQE, and VDRA…IGED.

Belongs to the WD repeat PROPPIN family. In terms of assembly, component of the PI(3,5)P2 regulatory complex at least composed of ATG18, SAC/FIG4, FAB1 and VAC14. As to expression, expressed in roots, stems, flowers and leaves.

Its subcellular location is the preautophagosomal structure membrane. The protein localises to the vacuole membrane. Its function is as follows. The PI(3,5)P2 regulatory complex regulates both the synthesis and turnover of phosphatidylinositol 3,5-bisphosphate (PtdIns(3,5)P2). Required for autophagy. This Arabidopsis thaliana (Mouse-ear cress) protein is Autophagy-related protein 18d (ATG18D).